The chain runs to 128 residues: Fluoride-specific ion channel FluC (128 aa).

4 consecutive transmembrane segments (helical) span residues 5 to 25 (IVAIFVGAGFGALLRWFLSIG), 35 to 55 (LGTLASNLIGGYLIGIAVVAF), 67 to 87 (LFVITGFMGGLTTFSTYSVEV), and 96 to 116 (FGWALAVAALHLIGSFTLTGL). The Na(+) site is built by glycine 75 and threonine 78.

The protein belongs to the fluoride channel Fluc/FEX (TC 1.A.43) family.

It is found in the cell inner membrane. The enzyme catalyses fluoride(in) = fluoride(out). With respect to regulation, na(+) is not transported, but it plays an essential structural role and its presence is essential for fluoride channel function. In terms of biological role, fluoride-specific ion channel. Important for reducing fluoride concentration in the cell, thus reducing its toxicity. In Burkholderia mallei (strain NCTC 10247), this protein is Fluoride-specific ion channel FluC.